Reading from the N-terminus, the 126-residue chain is Scygonadin (126 aa).

Positions 1–24 (MRSSLLLGLTVVVLLGVIVPPCMA) are cleaved as a signal peptide.

As to expression, expressed in the ejaculatory ducts of mature males. Not detected in the ejaculatory ducts of immature males. Not detected in hepatopancreas, female reproductive tract, eyes, exoskeleton, subcuticular epithelia, heart, gills, stomach, muscle and hemocytes.

The protein resides in the secreted. Has antibacterial activity against the Gram-positive bacterium M.luteus with an IC(90) of 125ug/ml. Has weak antibacterial activity against the Gram-negative bacterium A.hydrophila. In Scylla serrata (Mud crab), this protein is Scygonadin.